A 1005-amino-acid chain; its full sequence is DNA polymerase (1005 aa).

This sequence belongs to the DNA polymerase type-B family. Interacts with OPG148. Component of the Uracil-DNA glycosylase(UDG)-OPG148-polymerase complex; OPG148 and OPG116/UDG form a heterodimeric processivity factor that associates with OPG071 to form the processive polymerase holoenzyme.

It catalyses the reaction DNA(n) + a 2'-deoxyribonucleoside 5'-triphosphate = DNA(n+1) + diphosphate. Catalyzes DNA synthesis. Acquires processivity by associating with a heterodimeric processivity factor comprised of the viral OPG148 and OPG116 proteins, thereby forming the DNA polymerase holoenzyme. Displays 3'- to 5' exonuclease activity. Might participate in viral DNA recombination. Does not perform OPG116/D4synthesis across an abasic site. The polypeptide is DNA polymerase (OPG071) (Variola virus).